A 212-amino-acid chain; its full sequence is Pyridoxine/pyridoxamine 5'-phosphate oxidase (212 aa).

Residues 59–64 (RMVLMK), 74–75 (YS), Lys-81, and Gln-103 each bind FMN. Substrate is bound at residue Lys-64. Substrate-binding residues include Tyr-121 and Arg-125. FMN contacts are provided by residues 138–139 (QS) and Trp-183. Residue 189–191 (RLH) coordinates substrate. Arg-193 provides a ligand contact to FMN.

It belongs to the pyridoxamine 5'-phosphate oxidase family. In terms of assembly, homodimer. The cofactor is FMN.

It catalyses the reaction pyridoxamine 5'-phosphate + O2 + H2O = pyridoxal 5'-phosphate + H2O2 + NH4(+). The enzyme catalyses pyridoxine 5'-phosphate + O2 = pyridoxal 5'-phosphate + H2O2. Its pathway is cofactor metabolism; pyridoxal 5'-phosphate salvage; pyridoxal 5'-phosphate from pyridoxamine 5'-phosphate: step 1/1. It participates in cofactor metabolism; pyridoxal 5'-phosphate salvage; pyridoxal 5'-phosphate from pyridoxine 5'-phosphate: step 1/1. Functionally, catalyzes the oxidation of either pyridoxine 5'-phosphate (PNP) or pyridoxamine 5'-phosphate (PMP) into pyridoxal 5'-phosphate (PLP). The chain is Pyridoxine/pyridoxamine 5'-phosphate oxidase from Rhodopseudomonas palustris (strain TIE-1).